The following is a 213-amino-acid chain: Na(+)-translocating NADH-quinone reductase subunit D (213 aa).

7 helical membrane passes run 21 to 41 (PLIA…VNTA), 42 to 62 (LTMG…VSLL), 77 to 97 (IIIS…FFDI), 101 to 121 (LSVF…AESL), 131 to 151 (FLDG…VSII), 153 to 173 (EFFG…FYAS), and 183 to 203 (FGLM…IWGV).

This sequence belongs to the NqrDE/RnfAE family. As to quaternary structure, composed of six subunits; NqrA, NqrB, NqrC, NqrD, NqrE and NqrF.

It localises to the cell inner membrane. It carries out the reaction a ubiquinone + n Na(+)(in) + NADH + H(+) = a ubiquinol + n Na(+)(out) + NAD(+). Functionally, NQR complex catalyzes the reduction of ubiquinone-1 to ubiquinol by two successive reactions, coupled with the transport of Na(+) ions from the cytoplasm to the periplasm. NqrA to NqrE are probably involved in the second step, the conversion of ubisemiquinone to ubiquinol. This chain is Na(+)-translocating NADH-quinone reductase subunit D, found in Chlamydia abortus (strain DSM 27085 / S26/3) (Chlamydophila abortus).